Consider the following 510-residue polypeptide: Lysine-specific demethylase 4D (510 aa).

The JmjN domain maps to 15-57 (IMIFRPTKEEFNDFDKYIAYMESQGAHRAGLAKVIPPKEWRAR). E23 and E24 each carry polyADP-ribosyl glutamic acid. Residue Y133 participates in 2-oxoglutarate binding. Residues 143 to 309 (DGKTQQWNVG…YGKVASQCSC (167 aa)) form the JmjC domain. Residues H189 and E191 each contribute to the Fe cation site. 2-oxoglutarate contacts are provided by N199 and K207. The Zn(2+) site is built by C235 and H241. 2-oxoglutarate is bound at residue K242. H277 is a binding site for Fe cation. 2 residues coordinate Zn(2+): C307 and C309. The segment at 397 to 510 (MCHTSRQAAD…ASEGGLTSDP (114 aa)) is disordered. Residues 461–471 (RLPEGRDDRSP) are compositionally biased toward basic and acidic residues.

It belongs to the JHDM3 histone demethylase family. Requires Fe(2+) as cofactor. Post-translationally, ubiquitinated via 'Lys-63'-linked ubiquitin chains. Deubiquitinated by USP14 with the help of TRIM14 leading to stabilization.

Its subcellular location is the nucleus. It carries out the reaction N(6),N(6),N(6)-trimethyl-L-lysyl(9)-[histone H3] + 2 2-oxoglutarate + 2 O2 = N(6)-methyl-L-lysyl(9)-[histone H3] + 2 formaldehyde + 2 succinate + 2 CO2. In terms of biological role, histone demethylase that specifically demethylates 'Lys-9' of histone H3, thereby playing a central role in histone code. Does not demethylate histone H3 'Lys-4', H3 'Lys-27', H3 'Lys-36' nor H4 'Lys-20'. Demethylates both di- and trimethylated H3 'Lys-9' residue, while it has no activity on monomethylated residues. Demethylation of Lys residue generates formaldehyde and succinate. The sequence is that of Lysine-specific demethylase 4D (Kdm4d) from Rattus norvegicus (Rat).